The primary structure comprises 101 residues: Small ribosomal subunit protein uS14 (101 aa).

This sequence belongs to the universal ribosomal protein uS14 family. As to quaternary structure, part of the 30S ribosomal subunit. Contacts proteins S3 and S10.

Binds 16S rRNA, required for the assembly of 30S particles and may also be responsible for determining the conformation of the 16S rRNA at the A site. The polypeptide is Small ribosomal subunit protein uS14 (Polynucleobacter necessarius subsp. necessarius (strain STIR1)).